The chain runs to 452 residues: tRNA modification GTPase MnmE (452 aa).

R25, E81, and K120 together coordinate (6S)-5-formyl-5,6,7,8-tetrahydrofolate. Residues 216–375 (GITVVIAGEP…LKNHLKNTAG (160 aa)) enclose the TrmE-type G domain. A K(+)-binding site is contributed by N226. GTP-binding positions include 226–231 (NVGKSS), 245–251 (TDIAGTT), and 270–273 (DTAG). S230 provides a ligand contact to Mg(2+). Positions 245, 247, and 250 each coordinate K(+). T251 contacts Mg(2+). (6S)-5-formyl-5,6,7,8-tetrahydrofolate is bound at residue K452.

It belongs to the TRAFAC class TrmE-Era-EngA-EngB-Septin-like GTPase superfamily. TrmE GTPase family. As to quaternary structure, homodimer. Heterotetramer of two MnmE and two MnmG subunits. K(+) serves as cofactor.

It is found in the cytoplasm. Its function is as follows. Exhibits a very high intrinsic GTPase hydrolysis rate. Involved in the addition of a carboxymethylaminomethyl (cmnm) group at the wobble position (U34) of certain tRNAs, forming tRNA-cmnm(5)s(2)U34. This chain is tRNA modification GTPase MnmE, found in Coxiella burnetii (strain Dugway 5J108-111).